The primary structure comprises 241 residues: GPI-anchored hemophore RBT5 (241 aa).

Residues 1 to 20 (MLALSLLSIVSIASAAGVTA) form the signal peptide. The CFEM domain occupies 26–137 (NPYTIFPSVA…DALAKAADAA (112 aa)). 4 disulfide bridges follow: Cys-54-Cys-94, Cys-58-Cys-89, Cys-68-Cys-75, and Cys-77-Cys-110. Asp-72 is a heme binding site. 2 stretches are compositionally biased toward low complexity: residues 140 to 154 (TTAESTTAESTAAET) and 163 to 182 (KETTAAETSKAAESSAPAET). Residues 140-210 (TTAESTTAES…SVAQSSSSAA (71 aa)) are disordered. The segment covering 183 to 199 (SKAEETSKAAETTKAEE) has biased composition (basic and acidic residues). The segment covering 200–210 (SSVAQSSSSAA) has biased composition (low complexity). The GPI-anchor amidated asparagine moiety is linked to residue Asn-221. A propeptide spans 222 to 241 (AGNMPAVAIGGVIAAVAALF) (removed in mature form).

It belongs to the RBT5 family. In terms of assembly, interacts with PGA7. In terms of processing, the GPI-anchor is attached to the protein in the endoplasmic reticulum and serves to target the protein to the cell surface. There, the glucosamine-inositol phospholipid moiety is cleaved off and the GPI-modified mannoprotein is covalently attached via its lipidless GPI glycan remnant to the 1,6-beta-glucan of the outer cell wall layer. Post-translationally, mannosylated.

It is found in the secreted. Its subcellular location is the cell wall. The protein localises to the cell membrane. Functionally, GPI-linked hyphal surface heme-binding protein involved in heme-iron utilization. Heme transfer occurs between PGA7, RBT5 and CSA2 supporting a model in which the 3 CFEM proteins cooperate in a heme-acquisition system and form a cross-cell wall heme-transfer cascade. The ability to acquire iron from host tissues is a major virulence factor of pathogenic microorganisms. Required for biofilm formation. This Candida albicans (strain SC5314 / ATCC MYA-2876) (Yeast) protein is GPI-anchored hemophore RBT5.